We begin with the raw amino-acid sequence, 249 residues long: Phosphoribosylaminoimidazole-succinocarboxamide synthase (249 aa).

This sequence belongs to the SAICAR synthetase family.

The catalysed reaction is 5-amino-1-(5-phospho-D-ribosyl)imidazole-4-carboxylate + L-aspartate + ATP = (2S)-2-[5-amino-1-(5-phospho-beta-D-ribosyl)imidazole-4-carboxamido]succinate + ADP + phosphate + 2 H(+). It participates in purine metabolism; IMP biosynthesis via de novo pathway; 5-amino-1-(5-phospho-D-ribosyl)imidazole-4-carboxamide from 5-amino-1-(5-phospho-D-ribosyl)imidazole-4-carboxylate: step 1/2. This Roseiflexus sp. (strain RS-1) protein is Phosphoribosylaminoimidazole-succinocarboxamide synthase.